We begin with the raw amino-acid sequence, 84 residues long: UPF0248 protein Pisl_1919 (84 aa).

It belongs to the UPF0248 family.

This chain is UPF0248 protein Pisl_1919, found in Pyrobaculum islandicum (strain DSM 4184 / JCM 9189 / GEO3).